The primary structure comprises 222 residues: tRNA (guanine-N(1)-)-methyltransferase (222 aa).

S-adenosyl-L-methionine contacts are provided by residues Gly-112 and 132–137 (IGDYVL).

The protein belongs to the RNA methyltransferase TrmD family. As to quaternary structure, homodimer.

It localises to the cytoplasm. The catalysed reaction is guanosine(37) in tRNA + S-adenosyl-L-methionine = N(1)-methylguanosine(37) in tRNA + S-adenosyl-L-homocysteine + H(+). Specifically methylates guanosine-37 in various tRNAs. This is tRNA (guanine-N(1)-)-methyltransferase from Azobacteroides pseudotrichonymphae genomovar. CFP2.